Here is a 280-residue protein sequence, read N- to C-terminus: Protein synthesis inhibitor II (280 aa).

Ala-1 is subject to N-acetylalanine. The active site involves Glu-174.

It belongs to the ribosome-inactivating protein family. Type 1 RIP subfamily.

It localises to the cytoplasm. The catalysed reaction is Endohydrolysis of the N-glycosidic bond at one specific adenosine on the 28S rRNA.. Inhibits the elongation phase of protein synthesis. It inactivates fungal ribosomes even more effectively than mammalian ribosomes and is thought to function as a constitutive antifungal agent in plants. The chain is Protein synthesis inhibitor II (RIP30A) from Hordeum vulgare (Barley).